The sequence spans 662 residues: ATP-dependent zinc metalloprotease FtsH (662 aa).

A compositionally biased stretch (basic and acidic residues) spans 1-15; it reads MSENPVKRPGKDGSR. The interval 1 to 35 is disordered; sequence MSENPVKRPGKDGSRNKFKPVQEEGGTPGWFRSKG. Residues 1–39 lie on the Cytoplasmic side of the membrane; that stretch reads MSENPVKRPGKDGSRNKFKPVQEEGGTPGWFRSKGESPQ. The chain crosses the membrane as a helical span at residues 40–60; that stretch reads GKFPGFLLFLMAGLLMLFVFL. Residues 61 to 154 are Periplasmic-facing; that stretch reads RFFSGTDAPE…LKVEKGSSDL (94 aa). A helical transmembrane segment spans residues 155–175; that stretch reads NTFLALFAPWIIFAALYFFLF. At 176–662 the chain is on the cytoplasmic side; that stretch reads RRMSGQNGAQ…QGALPNPVTA (487 aa). ATP is bound at residue 250 to 257; the sequence is GPPGTGKT. His-472 contacts Zn(2+). Residue Glu-473 is part of the active site. Positions 476 and 548 each coordinate Zn(2+).

In the central section; belongs to the AAA ATPase family. This sequence in the C-terminal section; belongs to the peptidase M41 family. In terms of assembly, homohexamer. It depends on Zn(2+) as a cofactor.

The protein localises to the cell inner membrane. Its function is as follows. Acts as a processive, ATP-dependent zinc metallopeptidase for both cytoplasmic and membrane proteins. Plays a role in the quality control of integral membrane proteins. The chain is ATP-dependent zinc metalloprotease FtsH from Pelodictyon phaeoclathratiforme (strain DSM 5477 / BU-1).